The sequence spans 778 residues: uncharacterized protein (778 aa).

Residues 1 to 92 enclose the PE domain; that stretch reads MSFVIAVPEA…GARSYVVAEA (92 aa). Disordered stretches follow at residues 125 to 163, 372 to 510, and 718 to 778; these read ADGT…AGLI, TGLA…GDAF, and QGGL…GADG. Gly residues-rich tracts occupy residues 402–429, 436–510, and 718–763; these read NQTG…GGLG, DGTG…GDAF, and QGGL…GSSG.

Belongs to the mycobacterial PE family. PGRS subfamily.

This is an uncharacterized protein from Mycobacterium bovis (strain ATCC BAA-935 / AF2122/97).